The sequence spans 268 residues: 4-hydroxy-tetrahydrodipicolinate reductase (268 aa).

Residues 7-12 (GAGGRM) and glutamate 33 each bind NAD(+). Arginine 34 is a binding site for NADP(+). Residues 97–99 (GTT) and 121–124 (SGNM) contribute to the NAD(+) site. Histidine 155 (proton donor/acceptor) is an active-site residue. Histidine 156 serves as a coordination point for (S)-2,3,4,5-tetrahydrodipicolinate. The active-site Proton donor is the lysine 159. (S)-2,3,4,5-tetrahydrodipicolinate is bound at residue 165–166 (GT).

This sequence belongs to the DapB family.

Its subcellular location is the cytoplasm. The catalysed reaction is (S)-2,3,4,5-tetrahydrodipicolinate + NAD(+) + H2O = (2S,4S)-4-hydroxy-2,3,4,5-tetrahydrodipicolinate + NADH + H(+). The enzyme catalyses (S)-2,3,4,5-tetrahydrodipicolinate + NADP(+) + H2O = (2S,4S)-4-hydroxy-2,3,4,5-tetrahydrodipicolinate + NADPH + H(+). The protein operates within amino-acid biosynthesis; L-lysine biosynthesis via DAP pathway; (S)-tetrahydrodipicolinate from L-aspartate: step 4/4. Functionally, catalyzes the conversion of 4-hydroxy-tetrahydrodipicolinate (HTPA) to tetrahydrodipicolinate. The sequence is that of 4-hydroxy-tetrahydrodipicolinate reductase from Brucella abortus (strain 2308).